The following is a 100-amino-acid chain: Urease subunit gamma (100 aa).

Belongs to the urease gamma subunit family. In terms of assembly, heterotrimer of UreA (gamma), UreB (beta) and UreC (alpha) subunits. Three heterotrimers associate to form the active enzyme.

The protein resides in the cytoplasm. The enzyme catalyses urea + 2 H2O + H(+) = hydrogencarbonate + 2 NH4(+). It functions in the pathway nitrogen metabolism; urea degradation; CO(2) and NH(3) from urea (urease route): step 1/1. This Klebsiella pneumoniae protein is Urease subunit gamma.